We begin with the raw amino-acid sequence, 398 residues long: S-adenosylmethionine decarboxylase proenzyme (398 aa).

Catalysis depends on residues Glu-18 and Glu-21. The Schiff-base intermediate with substrate; via pyruvic acid role is filled by Ser-78. Pyruvic acid (Ser); by autocatalysis is present on Ser-78. Residue Cys-92 is the Proton donor; for catalytic activity of the active site. Residues Ser-243 and His-256 each act as proton acceptor; for processing activity in the active site.

It belongs to the eukaryotic AdoMetDC family. Requires pyruvate as cofactor. Post-translationally, is synthesized initially as an inactive proenzyme. Formation of the active enzyme involves a self-maturation process in which the active site pyruvoyl group is generated from an internal serine residue via an autocatalytic post-translational modification. Two non-identical subunits are generated from the proenzyme in this reaction, and the pyruvate is formed at the N-terminus of the alpha chain, which is derived from the carboxyl end of the proenzyme. The post-translation cleavage follows an unusual pathway, termed non-hydrolytic serinolysis, in which the side chain hydroxyl group of the serine supplies its oxygen atom to form the C-terminus of the beta chain, while the remainder of the serine residue undergoes an oxidative deamination to produce ammonia and the pyruvoyl group blocking the N-terminus of the alpha chain.

The enzyme catalyses S-adenosyl-L-methionine + H(+) = S-adenosyl 3-(methylsulfanyl)propylamine + CO2. It functions in the pathway amine and polyamine biosynthesis; S-adenosylmethioninamine biosynthesis; S-adenosylmethioninamine from S-adenosyl-L-methionine: step 1/1. The chain is S-adenosylmethionine decarboxylase proenzyme (SAMDC) from Oryza sativa subsp. indica (Rice).